Consider the following 135-residue polypeptide: MLSPKRTRFRKQHRGRLKGISSRGNRICFGRYALQTLEPAWITSRQIEAGRRAMTRNVRRGGKIWVRIFPDKPVTVRPAETRMGSGKGSPEYWVAVVKPGKILYEMGGVPENIARKAISIAASKMPIKTQFIISE.

The protein belongs to the universal ribosomal protein uL16 family. In terms of assembly, part of the 50S ribosomal subunit.

Its subcellular location is the plastid. It localises to the chloroplast. This is Large ribosomal subunit protein uL16c from Olimarabidopsis pumila (Dwarf rocket).